The sequence spans 252 residues: Putative peptide zinc metalloprotease protein YydH (252 aa).

2 consecutive transmembrane segments (helical) span residues 56-76 (FFYLFLSFTALMFILNYIHLI) and 85-105 (VFYGWKMWIIIVIYFIMNIVL). Residue histidine 106 participates in Zn(2+) binding. Glutamate 107 is a catalytic residue. Residue histidine 110 participates in Zn(2+) binding. A run of 3 helical transmembrane segments spans residues 152–172 (IIVHLFGLFINYLLINTLELI), 181–201 (ALTMAFMLFSSTLLWNLIPIL), and 231–251 (IQIIGIGLAVNSVVHWILYIV).

The protein belongs to the peptidase M50B family. Zn(2+) serves as cofactor.

It is found in the cell membrane. Its function is as follows. Required for production of the modified peptide YydF. May process the precursor form of YydF to release the active peptide (Potential). This Bacillus subtilis (strain 168) protein is Putative peptide zinc metalloprotease protein YydH (yydH).